Reading from the N-terminus, the 845-residue chain is Matrin-3 (845 aa).

The residue at position 2 (S2) is an N-acetylserine. K3 carries the N6-acetyllysine; alternate modification. K3 is covalently cross-linked (Glycyl lysine isopeptide (Lys-Gly) (interchain with G-Cter in SUMO2); alternate). S4, S9, S14, S22, S41, S118, and S126 each carry phosphoserine. Residues K132 and K146 each participate in a glycyl lysine isopeptide (Lys-Gly) (interchain with G-Cter in SUMO2) cross-link. Disordered stretches follow at residues 147 to 174 (RRRTEEGPTLSYGRDGRSATREPPYRVP) and 187 to 213 (DSFDDRGPSLNPVLDYDHGSRSQESGY). Phosphothreonine is present on T150. Residue S157 is modified to Phosphoserine. Position 158 is a phosphotyrosine (Y158). A compositionally biased stretch (basic and acidic residues) spans 160–174 (RDGRSATREPPYRVP). 3 positions are modified to phosphoserine: S164, S188, and S195. Residues 201–213 (DYDHGSRSQESGY) are compositionally biased toward basic and acidic residues. At Y202 the chain carries Phosphotyrosine. Residues S206, S208, and S211 each carry the phosphoserine modification. The residue at position 219 (Y219) is a Phosphotyrosine. The residue at position 234 (S234) is a Phosphoserine. Residue K245 forms a Glycyl lysine isopeptide (Lys-Gly) (interchain with G-Cter in SUMO2) linkage. Residue S264 is modified to Phosphoserine. K269 is covalently cross-linked (Glycyl lysine isopeptide (Lys-Gly) (interchain with G-Cter in SUMO2)). At S275 the chain carries Phosphoserine. Positions 342–394 (PFMLQQSTNPAPGILGPPPPSFHLGGPAVGPRGNLGAGNGNLQGPRHMQKGRV) are disordered. One can recognise an RRM 1 domain in the interval 398–473 (RVVHIMDFQR…KPVRVHLSQK (76 aa)). Glycyl lysine isopeptide (Lys-Gly) (interchain with G-Cter in SUMO2) cross-links involve residues K478, K487, and K491. An RRM 2 domain is found at 496–571 (RVIHLSNLPH…RCVKVDLSEK (76 aa)). Phosphoserine occurs at positions 509 and 511. K515 participates in a covalent cross-link: Glycyl lysine isopeptide (Lys-Gly) (interchain with G-Cter in SUMO2). Position 522 is an N6-acetyllysine; alternate (K522). Residue K522 forms a Glycyl lysine isopeptide (Lys-Gly) (interchain with G-Cter in SUMO2); alternate linkage. Phosphoserine is present on S533. Residues K554 and K555 each participate in a glycyl lysine isopeptide (Lys-Gly) (interchain with G-Cter in SUMO2) cross-link. At K571 the chain carries N6-acetyllysine. The disordered stretch occupies residues 588–785 (KKDKSRKRSY…EYRIGPYQPN (198 aa)). Phosphoserine occurs at positions 596, 598, 604, and 606. Residues 600-643 (DGKESPSDKKSKTDGAQKTENPAEGKEQEEKSGEDGEKDTKDDQ) are compositionally biased toward basic and acidic residues. Residues K617 and K630 each participate in a glycyl lysine isopeptide (Lys-Gly) (interchain with G-Cter in SUMO2) cross-link. A compositionally biased stretch (acidic residues) spans 653–665 (ESEDELLVDEEEA). Phosphoserine occurs at positions 654, 671, 673, and 674. The residue at position 679 (T679) is a Phosphothreonine. A Phosphoserine modification is found at S689. Over residues 689–704 (SDGKKEPSDKAVKKDA) the composition is skewed to basic and acidic residues. The Nuclear localization signal signature appears at 708–716 (SKKKLKKVD). Glycyl lysine isopeptide (Lys-Gly) (interchain with G-Cter in SUMO2) cross-links involve residues K717 and K734. The residue at position 739 (T739) is a Phosphothreonine. 3 positions are modified to phosphoserine: S745, S757, and S760. A compositionally biased stretch (basic and acidic residues) spans 765–778 (DENKEDYTIPDEYR). K768 is covalently cross-linked (Glycyl lysine isopeptide (Lys-Gly) (interchain with G-Cter in SUMO2)). A Matrin-type zinc finger spans residues 799–830 (FYCKLCSLFYTNEEVAKNTHCSSLPHYQKLKK). The residue at position 834 (K834) is an N6-acetyllysine; alternate. K834 participates in a covalent cross-link: Glycyl lysine isopeptide (Lys-Gly) (interchain with G-Cter in SUMO2); alternate.

In terms of assembly, part of a complex consisting of SFPQ, NONO and MATR3. Interacts with AGO1 and AGO2. Part of a complex composed at least of ASH2L, EMSY, HCFC1, HSPA8, CCAR2, MATR3, MKI67, RBBP5, TUBB2A, WDR5 and ZNF335; this complex may have a histone H3-specific methyltransferase activity. Interacts with TARDBP. Part of the HDP-RNP complex composed of at least HEXIM1, PRKDC, XRCC5, XRCC6, paraspeckle proteins (SFPQ, NONO, PSPC1, RBM14, and MATR3) and NEAT1 RNA. Interacts with FUS. Interacts with IGF2BP1. Interacts with IGF2BP2 and IGF2BP3. Interacts with RBPMS.

It is found in the nucleus matrix. May play a role in transcription or may interact with other nuclear matrix proteins to form the internal fibrogranular network. In association with the SFPQ-NONO heteromer may play a role in nuclear retention of defective RNAs. Plays a role in the regulation of DNA virus-mediated innate immune response by assembling into the HDP-RNP complex, a complex that serves as a platform for IRF3 phosphorylation and subsequent innate immune response activation through the cGAS-STING pathway. Binds to N6-methyladenosine (m6A)-containing mRNAs and contributes to MYC stability by binding to m6A-containing MYC mRNAs. May bind to specific miRNA hairpins. This chain is Matrin-3 (Matr3), found in Rattus norvegicus (Rat).